An 856-amino-acid polypeptide reads, in one-letter code: MNIPDKPSLEGLEEKWSKLWKSSKIYNFELEQVSAKQDVYSIDTPPPTASGVLHIGHVFSYTHTDIIARFQRMQGKIVFYPMGWDDNGLPTERRVQNYFSVRCDPSLPYCQNLKLAQINNDSMARSISRRNFIELCQQLSEEDERKFEELWNYLGLSVDWSQTYRTIDDDAIHLSQHFFLENVNSGAAYQDWAPTLWDVTYRTAVAQAEIEERQITGFYYRLAFENENATVEIETTRPELLAGCVALVAHPDDNRYKHLFGSHVITPVFDVKVPVLPHRAAQPDKGSGIAMVCTFGDITDVQWWRDLNLQSCPIIDASGRVVPDAPDPIVSERGRRAFATLSGKTLSAAKKHTLEMLISEKSIIGEPRKITHPVKFFEKGDKPLEILLTRQWYIRNGYSDNALTERLIELGKQLQWYPKTMLRRYEGWLTGLNSDWLISRQRFLGVPFPIWYQTDDRGNAKFDDPIFPDRKDLPLDPTIAVPRGYSENQRGAPNGFVAETDVMDTWATSSLTPQLAGKYLKNPKLFEAIFPYSLRPQGQDIIRTWLFSSIIRSEYAHATAPWKSTAISGFILDPDRKKMSKSKGNAKTPKDILDRYGADAVRYWAACARLGVDTALDVENPTQIKIGRRLALKVLNAARFVVHLHKNKETYSGQPDMKRCYPIDFAAISNPLDLSLLKQLDQTIEQSTNALKNFDHSKALDTTETFFWNFCDNYVEIVKDRAYAGDESALTTLLVVTNIVIKLLAPFIPYATEEAWSWFNETSVHTQSWPETLKLHSGDIELLKIACSFMSLVRGGKTEAKLSQKTEIAYLKIALPNPEIIMPIMDDLRRAGKIDKCELIDGDAQILAIEYGEISR.

Positions 47–57 (PTASGVLHIGH) match the 'HIGH' region motif. Residues 578–582 (KMSKS) carry the 'KMSKS' region motif. An ATP-binding site is contributed by K581.

The protein belongs to the class-I aminoacyl-tRNA synthetase family. ValS type 2 subfamily. In terms of assembly, monomer.

The protein resides in the cytoplasm. It catalyses the reaction tRNA(Val) + L-valine + ATP = L-valyl-tRNA(Val) + AMP + diphosphate. Functionally, catalyzes the attachment of valine to tRNA(Val). As ValRS can inadvertently accommodate and process structurally similar amino acids such as threonine, to avoid such errors, it has a 'posttransfer' editing activity that hydrolyzes mischarged Thr-tRNA(Val) in a tRNA-dependent manner. The sequence is that of Valine--tRNA ligase from Tropheryma whipplei (strain Twist) (Whipple's bacillus).